We begin with the raw amino-acid sequence, 675 residues long: Collagen alpha-3(IX) chain (675 aa).

Positions 1 to 21 (MTVFPTLGLLFLCQLLATTSA) are cleaved as a signal peptide. Disordered regions lie at residues 22–517 (QRVG…KEAS) and 542–660 (KPLS…ICDT). The triple-helical region 3 (COL3) stretch occupies residues 25-515 (GPQGPPGPRG…TGKPGPPGKE (491 aa)). Pro residues-rich tracts occupy residues 27–38 (QGPPGPRGPPGP) and 51–60 (SGLPGPPGPK). A compositionally biased stretch (low complexity) spans 62–87 (APGKPGAAGEAGLPGLPGVDGLTGTD). Residues 105–125 (AGPPGPAGKGLPGPPGPPGPS) are compositionally biased toward pro residues. A compositionally biased stretch (gly residues) spans 126-135 (GLPGGNGFRG). Composition is skewed to pro residues over residues 136 to 155 (PPGPSGLPGFPGPPGPPGPP) and 173 to 184 (LCPPGPPGPPGM). Positions 218 to 233 (PGSVGLQGPRGLRGLP) are enriched in low complexity. A Cell attachment site motif is present at residues 242–244 (RGD). A compositionally biased stretch (basic and acidic residues) spans 301-317 (KDGRDGAPGLDGEKGDA). Low complexity predominate over residues 361-374 (EPGIPGDVGIPGDR). Asparagine 479 carries N-linked (GlcNAc...) asparagine glycosylation. The segment covering 481–508 (TAGAPGIPGHPGPMGHQGEQGVPGITGK) has biased composition (low complexity). Positions 516–546 (ASEQHIRELCGEMINDQIAQLAANLRKPLSP) are nonhelical region 3 (NC3). The interval 547 to 626 (GMTGRPGPAG…QGLPGVPGIS (80 aa)) is triple-helical region 2 (COL2). Residues 569–582 (HPGARGPPGYRGPT) are compositionally biased toward low complexity. The short motif at 591-593 (RGD) is the Cell attachment site element. The segment covering 613–624 (DQGPQGLPGVPG) has biased composition (low complexity). Positions 627–631 (KNGRD) are nonhelical region 2 (NC2). Residues 632-658 (GAQGEPGLPGDPGTPGAVGAQGTPGIC) are triple-helical region 1 (COL1). The tract at residues 659–675 (DTSACMGAVGASTSKKS) is nonhelical region 1 (NC1).

This sequence belongs to the fibril-associated collagens with interrupted helices (FACIT) family. In terms of assembly, trimers composed of three different chains: alpha 1(IX), alpha 2(IX), and alpha 3(IX). In terms of processing, prolines at the third position of the tripeptide repeating unit (G-X-Y) are hydroxylated in some or all of the chains.

It is found in the secreted. The protein resides in the extracellular space. It localises to the extracellular matrix. Its function is as follows. Collagen type IX is a minor cartilage non-fibrillar collagen. It is associated with type II collagen fibrils. This Gallus gallus (Chicken) protein is Collagen alpha-3(IX) chain (COL9A3).